A 441-amino-acid chain; its full sequence is Protein disulfide isomerase-like 2-3 (441 aa).

The first 18 residues, 1–18 (MRPAVAAALLLVAAAVAA), serve as a signal peptide directing secretion. Thioredoxin domains lie at 19 to 139 (SPVS…ALLR) and 159 to 276 (SEKT…ANAA). Active-site nucleophile residues include cysteine 59 and cysteine 62. Cysteine 59 and cysteine 62 are oxidised to a cystine. Residues 143 to 166 (NGKTSAGSGGKKSGGSSEKTEPSA) are disordered. Catalysis depends on nucleophile residues cysteine 195 and cysteine 198. An intrachain disulfide couples cysteine 195 to cysteine 198.

It belongs to the protein disulfide isomerase family.

It localises to the endoplasmic reticulum lumen. The enzyme catalyses Catalyzes the rearrangement of -S-S- bonds in proteins.. Functionally, acts as a protein-folding catalyst that interacts with nascent polypeptides to catalyze the formation, isomerization, and reduction or oxidation of disulfide bonds. May play a role in storage protein biogenesis. This Oryza sativa subsp. japonica (Rice) protein is Protein disulfide isomerase-like 2-3 (PDIL2-3).